The chain runs to 417 residues: CinA-like protein (417 aa).

It belongs to the CinA family.

In Microcystis aeruginosa (strain NIES-843 / IAM M-2473), this protein is CinA-like protein.